A 519-amino-acid chain; its full sequence is NADH-quinone oxidoreductase subunit N (519 aa).

Transmembrane regions (helical) follow at residues 14–34 (LLPA…EVFL), 44–64 (AVLT…TMFE), 82–102 (FLTF…VSFL), 117–137 (LFAS…TLFV), 167–187 (FILG…LYGA), 209–229 (GLVY…VAAV), 249–269 (LMSV…FFMV), 278–298 (LLGL…LLAI), 307–327 (LAYS…ALFV), 359–379 (ILYY…IVSV), 407–427 (WAFA…TIGF), 431–451 (LLIF…VGVL), and 487–507 (LALV…GPIM).

Belongs to the complex I subunit 2 family. As to quaternary structure, NDH-1 is composed of 14 different subunits. Subunits NuoA, H, J, K, L, M, N constitute the membrane sector of the complex.

It localises to the cell inner membrane. It carries out the reaction a quinone + NADH + 5 H(+)(in) = a quinol + NAD(+) + 4 H(+)(out). Its function is as follows. NDH-1 shuttles electrons from NADH, via FMN and iron-sulfur (Fe-S) centers, to quinones in the respiratory chain. The immediate electron acceptor for the enzyme in this species is believed to be ubiquinone. Couples the redox reaction to proton translocation (for every two electrons transferred, four hydrogen ions are translocated across the cytoplasmic membrane), and thus conserves the redox energy in a proton gradient. The chain is NADH-quinone oxidoreductase subunit N from Myxococcus xanthus (strain DK1622).